The following is a 290-amino-acid chain: Triplex capsid protein 1 (290 aa).

Belongs to the herpesviridae TRX1 protein family. In terms of assembly, interacts with TRX2, MCP and capsid vertex component 2/CVC2.

The protein localises to the virion. The protein resides in the host nucleus. Structural component of the T=16 icosahedral capsid. The capsid is composed of pentamers and hexamers of major capsid protein/MCP, which are linked together by heterotrimers called triplexes. These triplexes are formed by a single molecule of triplex protein 1/TRX1 and two copies of triplex protein 2/TRX2. Additionally, TRX1 is required for efficient transport of TRX2 to the nucleus, which is the site of capsid assembly. The chain is Triplex capsid protein 1 from Human cytomegalovirus (strain AD169) (HHV-5).